Reading from the N-terminus, the 478-residue chain is Protein ZINC INDUCED FACILITATOR-LIKE 1 (478 aa).

12 consecutive transmembrane segments (helical) span residues 43 to 63 (IIVL…YFMI), 81 to 101 (FVGC…GLVA), 108 to 128 (PVIL…GLSL), 130 to 150 (FWMA…LGPI), 169 to 189 (AVST…GFLA), 208 to 228 (FPFF…TIVS), 280 to 300 (IIVY…FSLW), 317 to 337 (VGSV…SLYS), 346 to 367 (IIVT…PLIA), 378 to 398 (VTSA…GLFI), 415 to 435 (IAMT…GIIF), and 453 to 473 (VFFI…KPFL).

This sequence belongs to the major facilitator superfamily. In terms of tissue distribution, predominantly expressed in roots and stomatal guard cells. Detected in anther stamen filaments and shoot apical meristem. In the mature portion of roots, restricted to the cortex. At the root tip, highly expressed in both the cortical and epidermal cell layers of the apical meristem and the transition zone, while absent from the quiescent center or the columella cells. Not detected in lateral root primordia.

The protein resides in the cell membrane. The protein localises to the vacuole membrane. Functionally, major facilitator superfamily (MFS) transporter probably involved in 2,4-dichlorophenoxyacetic acid (2,4-D) export. K(+) may be the physiological substrate of the transporter. In terms of biological role, modulates root auxin-related processes. Involved in auxin efflux and acts as a positive regulator of shootward transport at the root apex. May mediate proton efflux from the vacuolar compartment. Its function is as follows. Mediates drought stress tolerance by regulating stomatal closure. The polypeptide is Protein ZINC INDUCED FACILITATOR-LIKE 1 (ZIFL1) (Arabidopsis thaliana (Mouse-ear cress)).